The chain runs to 278 residues: Nucleotide-binding protein Tbd_0529 (278 aa).

8–15 serves as a coordination point for ATP; it reads GLSGSGKS. Position 57–60 (57–60) interacts with GTP; that stretch reads DARS.

This sequence belongs to the RapZ-like family.

Functionally, displays ATPase and GTPase activities. The sequence is that of Nucleotide-binding protein Tbd_0529 from Thiobacillus denitrificans (strain ATCC 25259 / T1).